The sequence spans 627 residues: 1-deoxy-D-xylulose-5-phosphate synthase (627 aa).

Residues H80 and 121-123 each bind thiamine diphosphate; that span reads GHS. D152 contributes to the Mg(2+) binding site. Residues 153–154, N181, Y288, and E370 each bind thiamine diphosphate; that span reads GA. N181 provides a ligand contact to Mg(2+).

Belongs to the transketolase family. DXPS subfamily. Homodimer. It depends on Mg(2+) as a cofactor. Thiamine diphosphate is required as a cofactor.

It carries out the reaction D-glyceraldehyde 3-phosphate + pyruvate + H(+) = 1-deoxy-D-xylulose 5-phosphate + CO2. It functions in the pathway metabolic intermediate biosynthesis; 1-deoxy-D-xylulose 5-phosphate biosynthesis; 1-deoxy-D-xylulose 5-phosphate from D-glyceraldehyde 3-phosphate and pyruvate: step 1/1. In terms of biological role, catalyzes the acyloin condensation reaction between C atoms 2 and 3 of pyruvate and glyceraldehyde 3-phosphate to yield 1-deoxy-D-xylulose-5-phosphate (DXP). The protein is 1-deoxy-D-xylulose-5-phosphate synthase of Aliivibrio fischeri (strain MJ11) (Vibrio fischeri).